We begin with the raw amino-acid sequence, 353 residues long: 11-beta-hydroxysteroid dehydrogenase B (353 aa).

Residues 10 to 30 form a helical; Signal-anchor for type II membrane protein membrane-spanning segment; sequence LFVPPASLITLAFSWPALCFP. The Proline-knob signature appears at 13 to 26; the sequence is PPASLITLAFSWPA. NADP(+) is bound by residues 54–80 and Asp-105; that span reads GASSGIGEQIAYEYALRRACLVLVARR. Residue Ser-184 participates in substrate binding. Tyr-197 acts as the Proton acceptor in catalysis. NADP(+)-binding positions include 197–201 and Lys-201; that span reads YAAAK.

Belongs to the short-chain dehydrogenases/reductases (SDR) family. Expressed in seeds (at protein level).

It localises to the lipid droplet. The protein resides in the membrane. It catalyses the reaction an 11beta-hydroxysteroid + NADP(+) = an 11-oxosteroid + NADPH + H(+). Functionally, has dehydrogenase activity against 11 beta-hydroxysteroid and 17 beta-hydroxysteroid. May be involved in signal transduction regulated by various sterols. The polypeptide is 11-beta-hydroxysteroid dehydrogenase B (Arachis hypogaea (Peanut)).